We begin with the raw amino-acid sequence, 575 residues long: Physarolisin (575 aa).

An N-terminal signal peptide occupies residues 1-18 (MRLLSLLFLLGLATLSFA). Positions 19 to 173 (VRSQWAQQGR…SIKNARTQVG (155 aa)) are cleaved as a propeptide — removed in mature form. The 396-residue stretch at 179 to 574 (YIVPYVIFDL…SKLLAFVQTL (396 aa)) folds into the Peptidase S53 domain. Asn200 carries an N-linked (GlcNAc...) asparagine glycan. Active-site charge relay system residues include Glu248 and Asp252. N-linked (GlcNAc...) asparagine glycosylation is found at Asn262, Asn307, Asn380, and Asn453. Catalysis depends on Ser484, which acts as the Charge relay system. Ca(2+) is bound by residues Asp529, Ile530, Gly552, and Asp554.

Ca(2+) serves as cofactor. In terms of processing, autocatalytically processed. N-glycosylated.

The enzyme catalyses Milk clotting activity. Preferential cleavage of 8-Gly-|-Ser-9 in B chain of insulin most rapidly, followed by 11-Leu-|-Val-12, 19-Cys(SO(3)H)-|-Gly and 24-Phe-|-Phe-25. No action on Ac-Phe-Tyr(I)2.. Its activity is regulated as follows. Inhibited by diisopropylfluorophosphate (DFP) and diazoacetyl-D,L-norleucine methyl ester (DAN). The protein is Physarolisin of Physarum polycephalum (Slime mold).